The chain runs to 219 residues: uncharacterized protein (219 aa).

The helical transmembrane segment at 28-50 (IVSSLIAGGYALFVSAFTSYVYT) threads the bilayer. Residues 155-218 (EILRESLSEI…EEIEKELEFF (64 aa)) are a coiled coil.

Its subcellular location is the membrane. This is an uncharacterized protein from Aquifex aeolicus (strain VF5).